The following is a 162-amino-acid chain: SsrA-binding protein (162 aa).

Residues 137–154 (HDKREDTKAREWDREKAR) are compositionally biased toward basic and acidic residues. Residues 137 to 162 (HDKREDTKAREWDREKARIMKNKHRG) are disordered.

The protein belongs to the SmpB family.

It is found in the cytoplasm. Its function is as follows. Required for rescue of stalled ribosomes mediated by trans-translation. Binds to transfer-messenger RNA (tmRNA), required for stable association of tmRNA with ribosomes. tmRNA and SmpB together mimic tRNA shape, replacing the anticodon stem-loop with SmpB. tmRNA is encoded by the ssrA gene; the 2 termini fold to resemble tRNA(Ala) and it encodes a 'tag peptide', a short internal open reading frame. During trans-translation Ala-aminoacylated tmRNA acts like a tRNA, entering the A-site of stalled ribosomes, displacing the stalled mRNA. The ribosome then switches to translate the ORF on the tmRNA; the nascent peptide is terminated with the 'tag peptide' encoded by the tmRNA and targeted for degradation. The ribosome is freed to recommence translation, which seems to be the essential function of trans-translation. This chain is SsrA-binding protein, found in Aeromonas salmonicida (strain A449).